We begin with the raw amino-acid sequence, 281 residues long: Oxidoreductase-like protein SRL4 (281 aa).

The NADP(+) site is built by L39, T60, K67, K152, and K197. The active-site Lowers pKa of active site Tyr is K197.

It belongs to the short-chain dehydrogenases/reductases (SDR) family.

Its function is as follows. May be involved in the regulation of dNTP production. Induces the SOS system when expressed in E.coli, therefore, it may play a role in DNA metabolism and/or in genome stability. The chain is Oxidoreductase-like protein SRL4 (SRL4) from Saccharomyces cerevisiae (strain ATCC 204508 / S288c) (Baker's yeast).